We begin with the raw amino-acid sequence, 299 residues long: uncharacterized protein (299 aa).

Belongs to the glycosyltransferase 2 family.

This is an uncharacterized protein from Mycoplasma pneumoniae (strain ATCC 29342 / M129 / Subtype 1) (Mycoplasmoides pneumoniae).